The chain runs to 296 residues: MMFKQYLQVTKPGIIFGNLISVIGGFLLASKGSIDYPLFIYTLVGVSLVVASGCVFNNYIDRDIDRKMERTKNRVLVKGLISPAVSLVYATLLGIAGFMLLWFGANPLACWLGVMGFVVYVGVYSLYMKRHSVYGTLIGSLSGAAPSVIGYCAVTGEFDSGAAILLAIFSLWQMPHSYAIAIFRFKDYQAANIPVLPVVKGISVAKNHITLYIIAFAVATLMLSLGGYAGYKYLVVAAAVSVWWLGMALRGYKVADDRIWARKLFGFSIIAITALSVMMSVDFMVPDSHTLLAAVW.

The Cytoplasmic segment spans residues 1–9 (MMFKQYLQV). The helical transmembrane segment at 10-28 (TKPGIIFGNLISVIGGFLL) threads the bilayer. At 29-37 (ASKGSIDYP) the chain is on the periplasmic side. Residues 38 to 56 (LFIYTLVGVSLVVASGCVF) form a helical membrane-spanning segment. The Cytoplasmic segment spans residues 57-78 (NNYIDRDIDRKMERTKNRVLVK). A helical membrane pass occupies residues 79 to 97 (GLISPAVSLVYATLLGIAG). Topologically, residues 98 to 107 (FMLLWFGANP) are periplasmic. Residues 108-126 (LACWLGVMGFVVYVGVYSL) form a helical membrane-spanning segment. At 127 to 197 (YMKRHSVYGT…YQAANIPVLP (71 aa)) the chain is on the cytoplasmic side. A helical transmembrane segment spans residues 198 to 216 (VVKGISVAKNHITLYIIAF). The Periplasmic segment spans residues 217–228 (AVATLMLSLGGY). A helical transmembrane segment spans residues 229 to 247 (AGYKYLVVAAAVSVWWLGM). Residues 248-268 (ALRGYKVADDRIWARKLFGFS) are Cytoplasmic-facing. A helical transmembrane segment spans residues 269-287 (IIAITALSVMMSVDFMVPD). The Periplasmic segment spans residues 288–296 (SHTLLAAVW).

Belongs to the UbiA prenyltransferase family. Protoheme IX farnesyltransferase subfamily.

The protein resides in the cell inner membrane. It carries out the reaction heme b + (2E,6E)-farnesyl diphosphate + H2O = Fe(II)-heme o + diphosphate. It functions in the pathway porphyrin-containing compound metabolism; heme O biosynthesis; heme O from protoheme: step 1/1. In terms of biological role, converts heme B (protoheme IX) to heme O by substitution of the vinyl group on carbon 2 of heme B porphyrin ring with a hydroxyethyl farnesyl side group. The protein is Protoheme IX farnesyltransferase of Shigella flexneri.